The chain runs to 780 residues: MIDVAPESKKAKDLKGDFWDAKNIQISIGEIITEEKPPEEEVKGPKPRPHVTDLRSWDMKLLERYEPFYAPFCDMCCLCTYGKCELLGKKGACGIDAATQQARTVLLACLIGTAAHAGHARHLVDHLIERLGEDYKIDLGSNVDIEAPITRTVMGKRPATLGDLREVMDYAEEQMSHLLSACHTGQEGDSKDFESKAFHAGLMDDLTREVADLAQIVALDLPKGDEDAPLVELGFGTIDTEKPVVLCIGHNVLPGADIVDYLDENEMEDQVEVCGICCAAIDVTRYNEAAKVVGPLSKQLRFIRSGVADVIVVDEQCVRTDVLEEALKNRSAVIATTDKMCLGLPDMTDEDPDKIVNDLINGNIEGALILDPEKVGEVAVKTAMKLAPIRKSLKKLPDIDEIIELASECTDCGWCQRVCPNSLPVMDAVKKAADGDLSKLEEMAIEELCYTCGRCEQECERNIPIVSMVTKAGERRVKDEKYRIRAGRGPAQDVEIRRVGAPIVLGDIPGVVAFVGCSNYPEGGKDVALMAKEFLERNYIVVTTGCGAMSIGEYRDEDGQTLYEKYGGQFDAKGLVNMGSCVSNAHVSGAAIKIANIFAQKPLEGNFEEIADYILNRVGACGVAWGAYSQKAAAIATGVNRWGIPVVLGPHGSKYRRLFLGRADDEEKWKLKDLRTGEVIDGEPAPEHLLYAAENREEATVMIAKLCIRPTDTPKGRQMKLSNYIDLHRKYLGTIPDDIDRFIRTEKDIPIVYKRDVMKILEEKNWKPRELPKEPSLLER.

[4Fe-4S] cluster contacts are provided by cysteine 73, cysteine 76, cysteine 77, cysteine 79, cysteine 84, and cysteine 93. Histidine 116 contributes to the CO binding site. Positions 250, 278, and 317 each coordinate [Ni-4Fe-4S] cluster. 4Fe-4S ferredoxin-type domains lie at 399 to 429 (IDEI…MDAV) and 440 to 469 (LEEM…VSMV). 8 residues coordinate [4Fe-4S] cluster: cysteine 409, cysteine 412, cysteine 415, cysteine 419, cysteine 449, cysteine 452, cysteine 455, and cysteine 459. The [Ni-4Fe-4S] cluster site is built by cysteine 517, cysteine 546, and cysteine 581.

It belongs to the Ni-containing carbon monoxide dehydrogenase family. Heterotetramer of two alpha and two epsilon subunits. The ACDS complex is made up of alpha, epsilon, beta, gamma and delta subunits with a probable stoichiometry of (alpha(2)epsilon(2))(4)-beta(8)-(gamma(1)delta(1))(8). It depends on [4Fe-4S] cluster as a cofactor. Requires [Ni-4Fe-4S] cluster as cofactor.

It carries out the reaction CO + 2 oxidized [2Fe-2S]-[ferredoxin] + H2O = 2 reduced [2Fe-2S]-[ferredoxin] + CO2 + 2 H(+). Part of the ACDS complex that catalyzes the reversible cleavage of acetyl-CoA, allowing autotrophic growth from CO(2). The alpha-epsilon subcomponent functions as a carbon monoxide dehydrogenase. The sequence is that of Acetyl-CoA decarbonylase/synthase complex subunit alpha from Methanothermobacter thermautotrophicus (strain ATCC 29096 / DSM 1053 / JCM 10044 / NBRC 100330 / Delta H) (Methanobacterium thermoautotrophicum).